The primary structure comprises 253 residues: Major prion protein (253 aa).

The N-terminal stretch at 1-22 (MANLGCWMLVLFVATWSDLGLC) is a signal peptide. The interaction with GRB2, ERI3 and SYN1 stretch occupies residues 23-230 (KKRPKPGGWN…ESQAYYQRGS (208 aa)). The disordered stretch occupies residues 26–108 (PKPGGWNTGG…WNKPSKPKTS (83 aa)). A run of 5 repeats spans residues 51–59 (PQGGGGWGQ), 60–67 (PHGGGWGQ), 68–75 (PHGGGWGQ), 76–83 (PHGGGWGQ), and 84–91 (PHGGGWGQ). Positions 51–91 (PQGGGGWGQPHGGGWGQPHGGGWGQPHGGGWGQPHGGGWGQ) are 5 X 8 AA tandem repeats of P-H-G-G-G-W-G-Q. Positions 52-95 (QGGGGWGQPHGGGWGQPHGGGWGQPHGGGWGQPHGGGWGQGGGT) are enriched in gly residues. Cu(2+)-binding residues include H61, G62, G63, H69, G70, G71, H77, G78, G79, H85, G86, and G87. An intrachain disulfide couples C179 to C214. N181 and N197 each carry an N-linked (GlcNAc...) asparagine glycan. S230 is lipidated: GPI-anchor amidated serine. A propeptide spans 231–253 (SMVFFSSPPVILLISFLIFLIVG) (removed in mature form).

This sequence belongs to the prion family. Monomer and homodimer. Has a tendency to aggregate into amyloid fibrils containing a cross-beta spine, formed by a steric zipper of superposed beta-strands. Soluble oligomers may represent an intermediate stage on the path to fibril formation. Copper binding may promote oligomerization. Interacts with GRB2, APP, ERI3/PRNPIP and SYN1. Mislocalized cytosolically exposed PrP interacts with MGRN1; this interaction alters MGRN1 subcellular location and causes lysosomal enlargement. Interacts with KIAA1191.

The protein resides in the cell membrane. The protein localises to the golgi apparatus. Its function is as follows. Its primary physiological function is unclear. Has cytoprotective activity against internal or environmental stresses. May play a role in neuronal development and synaptic plasticity. May be required for neuronal myelin sheath maintenance. May play a role in iron uptake and iron homeostasis. Soluble oligomers are toxic to cultured neuroblastoma cells and induce apoptosis (in vitro). Association with GPC1 (via its heparan sulfate chains) targets PRNP to lipid rafts. Also provides Cu(2+) or Zn(2+) for the ascorbate-mediated GPC1 deaminase degradation of its heparan sulfate side chains. This Trachypithecus francoisi (Francois' leaf monkey) protein is Major prion protein (PRNP).